Here is a 319-residue protein sequence, read N- to C-terminus: Transcription factor bHLH111 (319 aa).

The segment at 1 to 23 is disordered; that stretch reads MDHHHHIASRNSSTTSELPSFEP. Residues 9–18 show a composition bias toward polar residues; that stretch reads SRNSSTTSEL. One can recognise a bHLH domain in the interval 195–244; sequence SEGSTLSPEKELPKAKLRDKITTLQQIVSPFGKTDTASVLQEAITYINFY.

As to quaternary structure, homodimer.

It localises to the nucleus. The chain is Transcription factor bHLH111 (BHLH111) from Arabidopsis thaliana (Mouse-ear cress).